The following is a 60-amino-acid chain: uncharacterized protein (60 aa).

The protein to E.coli YjeQ and H.influenzae HI_1714.

This is an uncharacterized protein from Azotobacter vinelandii.